Reading from the N-terminus, the 906-residue chain is Protein translocase subunit SecA (906 aa).

ATP contacts are provided by residues Gln-86, Gly-104–Thr-108, and Asp-511. Basic and acidic residues predominate over residues Glu-852–Asp-888. Residues Glu-852 to Glu-906 are disordered. Zn(2+) contacts are provided by Cys-890, Cys-892, Cys-901, and His-902. Over residues Lys-896–Glu-906 the composition is skewed to basic residues.

It belongs to the SecA family. As to quaternary structure, monomer and homodimer. Part of the essential Sec protein translocation apparatus which comprises SecA, SecYEG and auxiliary proteins SecDF-YajC and YidC. Zn(2+) is required as a cofactor.

It is found in the cell inner membrane. The protein resides in the cytoplasm. The catalysed reaction is ATP + H2O + cellular proteinSide 1 = ADP + phosphate + cellular proteinSide 2.. Its function is as follows. Part of the Sec protein translocase complex. Interacts with the SecYEG preprotein conducting channel. Has a central role in coupling the hydrolysis of ATP to the transfer of proteins into and across the cell membrane, serving both as a receptor for the preprotein-SecB complex and as an ATP-driven molecular motor driving the stepwise translocation of polypeptide chains across the membrane. This is Protein translocase subunit SecA from Francisella tularensis subsp. tularensis (strain SCHU S4 / Schu 4).